Here is a 328-residue protein sequence, read N- to C-terminus: Global transcription regulator sge1 (328 aa).

Disordered regions lie at residues 94–120 and 251–293; these read PGEK…PRQR and QMHQ…QYVH. 3 stretches are compositionally biased toward low complexity: residues 106–116, 251–261, and 282–293; these read KSTTQSGGISK, QMHQPQVHQPL, and AHQPQVHQQYVH.

This sequence belongs to the MIT1/WOR1 family.

It is found in the nucleus. Global transcriptional regulator of transcription that impacts, but is not absolutely required for secondary metabolism and pathogenicity on maize. Regulates synthesis of multiple secondary metabolites, including fumonisins and fusarins. In Gibberella moniliformis (strain M3125 / FGSC 7600) (Maize ear and stalk rot fungus), this protein is Global transcription regulator sge1.